The chain runs to 495 residues: Pleckstrin homology domain-containing family O member 2 (495 aa).

The region spanning 18–120 (TADKAGWIKK…WIKALNEGIN (103 aa)) is the PH domain. Phosphoserine occurs at positions 165 and 168. The disordered stretch occupies residues 171–411 (LSRLDLDVPD…ESPQHPRLPK (241 aa)). Over residues 198-213 (QEPPRALMPPVKPSPG) the composition is skewed to pro residues. Residue Thr-233 is modified to Phosphothreonine. The segment covering 235–244 (DSASSGANPE) has biased composition (polar residues). 5 positions are modified to phosphoserine: Ser-236, Ser-238, Ser-239, Ser-274, and Ser-292. The residue at position 296 (Thr-296) is a Phosphothreonine. Residues 324-335 (SGVDASGSSQSS) show a composition bias toward low complexity. Positions 336–350 (EAPETTSPEPTQVSV) are enriched in polar residues. Ser-395 carries the phosphoserine modification. Residues 399–411 (LLRESPQHPRLPK) show a composition bias toward basic and acidic residues. Positions 444 to 469 (CAESLLSQAVEQLRQATQVLQEMRDL) form a coiled coil.

The chain is Pleckstrin homology domain-containing family O member 2 (Plekho2) from Mus musculus (Mouse).